We begin with the raw amino-acid sequence, 243 residues long: Uridylate kinase (243 aa).

Lys18 to Gly21 serves as a coordination point for ATP. Position 59 (Gly59) interacts with UMP. Residues Gly60 and Arg64 each coordinate ATP. Residues Asp79 and Met140–Thr147 contribute to the UMP site. Positions 173 and 176 each coordinate ATP.

The protein belongs to the UMP kinase family. Homohexamer.

It is found in the cytoplasm. The enzyme catalyses UMP + ATP = UDP + ADP. Its pathway is pyrimidine metabolism; CTP biosynthesis via de novo pathway; UDP from UMP (UMPK route): step 1/1. With respect to regulation, inhibited by UTP. Catalyzes the reversible phosphorylation of UMP to UDP. The protein is Uridylate kinase of Corynebacterium glutamicum (strain R).